The following is a 552-amino-acid chain: Chaperonin GroEL (552 aa).

ATP is bound by residues 30–33 (TLGP), Lys-51, 87–91 (DGTTT), Gly-415, 479–481 (NAA), and Asp-495.

This sequence belongs to the chaperonin (HSP60) family. Forms a cylinder of 14 subunits composed of two heptameric rings stacked back-to-back. Interacts with the co-chaperonin GroES.

The protein localises to the cytoplasm. The enzyme catalyses ATP + H2O + a folded polypeptide = ADP + phosphate + an unfolded polypeptide.. Functionally, together with its co-chaperonin GroES, plays an essential role in assisting protein folding. The GroEL-GroES system forms a nano-cage that allows encapsulation of the non-native substrate proteins and provides a physical environment optimized to promote and accelerate protein folding. This Stutzerimonas stutzeri (Pseudomonas stutzeri) protein is Chaperonin GroEL.